The following is a 242-amino-acid chain: 1-(5-phosphoribosyl)-5-[(5-phosphoribosylamino)methylideneamino] imidazole-4-carboxamide isomerase (242 aa).

D10 serves as the catalytic Proton acceptor. D131 (proton donor) is an active-site residue.

The protein belongs to the HisA/HisF family.

It localises to the cytoplasm. The enzyme catalyses 1-(5-phospho-beta-D-ribosyl)-5-[(5-phospho-beta-D-ribosylamino)methylideneamino]imidazole-4-carboxamide = 5-[(5-phospho-1-deoxy-D-ribulos-1-ylimino)methylamino]-1-(5-phospho-beta-D-ribosyl)imidazole-4-carboxamide. It participates in amino-acid biosynthesis; L-histidine biosynthesis; L-histidine from 5-phospho-alpha-D-ribose 1-diphosphate: step 4/9. This Bifidobacterium animalis subsp. lactis (strain AD011) protein is 1-(5-phosphoribosyl)-5-[(5-phosphoribosylamino)methylideneamino] imidazole-4-carboxamide isomerase.